The following is a 122-amino-acid chain: MYRYEISCPFNLRSPAVPVSSKASSTSFIKTKALRISEVNRELSVPRVYREKSFTRRLNAPIFGSLFVDKESRFANPYSFTLNQGLTRGRGKQAKLAPDRRGKSVVTEVDYRTGVGENIVKD.

The protein localises to the mitochondrion. This is an uncharacterized protein from Arabidopsis thaliana (Mouse-ear cress).